Reading from the N-terminus, the 685-residue chain is DNA ligase (685 aa).

NAD(+)-binding positions include 47-51 (DSEYD), 96-97 (SL), and glutamate 125. The active-site N6-AMP-lysine intermediate is the lysine 127. Positions 148, 185, 304, and 328 each coordinate NAD(+). Residues cysteine 422, cysteine 425, cysteine 440, and cysteine 446 each coordinate Zn(2+). The BRCT domain occupies 605-685 (ADAQPLKGQT…ALLALFAANR (81 aa)).

This sequence belongs to the NAD-dependent DNA ligase family. LigA subfamily. Mg(2+) serves as cofactor. Mn(2+) is required as a cofactor.

The catalysed reaction is NAD(+) + (deoxyribonucleotide)n-3'-hydroxyl + 5'-phospho-(deoxyribonucleotide)m = (deoxyribonucleotide)n+m + AMP + beta-nicotinamide D-nucleotide.. DNA ligase that catalyzes the formation of phosphodiester linkages between 5'-phosphoryl and 3'-hydroxyl groups in double-stranded DNA using NAD as a coenzyme and as the energy source for the reaction. It is essential for DNA replication and repair of damaged DNA. The sequence is that of DNA ligase from Shewanella sp. (strain W3-18-1).